Consider the following 1370-residue polypeptide: Histidine kinase P4 (1370 aa).

The first 20 residues, 1–20 (MRNIGVFSVILFSFLAISLK), serve as a signal peptide directing secretion. A helical membrane pass occupies residues 799 to 819 (WAFCLYALCIGTALIALISFL). The 221-residue stretch at 852–1072 (NISHEFRTPL…IFRVSLPLGR (221 aa)) folds into the Histidine kinase domain. The residue at position 855 (His-855) is a Phosphohistidine; by autocatalysis. Residues 1119–1234 (TILIVEDHKP…EFRLRIKNIL (116 aa)) form the Response regulatory domain. At Asp-1167 the chain carries 4-aspartylphosphate. The HTH araC/xylS-type domain occupies 1266 to 1365 (KKAFKIVEDN…NETPSQYQNR (100 aa)). 2 DNA-binding regions (H-T-H motif) span residues 1284–1305 (LAFS…KAWT) and 1332–1355 (ISQI…QKKF).

Autophosphorylated. Activation requires a sequential transfer of a phosphate group from a His in the primary transmitter domain, to an Asp in the receiver domain and to a His in the secondary transmitter domain.

Its subcellular location is the membrane. It is found in the cell surface. The enzyme catalyses ATP + protein L-histidine = ADP + protein N-phospho-L-histidine.. Functionally, histidine kinase probably involved in ulvan degradation. Ulvan is the main polysaccharide component of the Ulvales (green seaweed) cell wall. It is composed of disaccharide building blocks comprising 3-sulfated rhamnose (Rha3S) linked to D-glucuronic acid (GlcA), L-iduronic acid (IduA), or D-xylose (Xyl). This Formosa agariphila (strain DSM 15362 / KCTC 12365 / LMG 23005 / KMM 3901 / M-2Alg 35-1) protein is Histidine kinase P4.